The sequence spans 140 residues: Cytochrome B5 isoform D (140 aa).

The Cytochrome b5 heme-binding domain maps to G5–D81. Residues H40 and H64 each contribute to the heme site. A helical transmembrane segment spans residues F109–I129.

Belongs to the cytochrome b5 family. In terms of assembly, interacts with CER1, BI-1, FAH1 and FAH2. As to expression, expressed in roots, stems, leaves, flowers and siliques.

It is found in the endoplasmic reticulum membrane. Its function is as follows. Membrane bound hemoprotein which function as an electron carrier for several membrane bound oxygenases, including fatty acid desaturases. This Arabidopsis thaliana (Mouse-ear cress) protein is Cytochrome B5 isoform D.